The primary structure comprises 219 residues: Protein OPG170 (219 aa).

The N-terminal stretch at 1–16 (MYSLLFIILMCIPFSF) is a signal peptide. The N-linked (GlcNAc...) asparagine; by host glycan is linked to Asn70.

It belongs to the orthopoxvirus OPG170 family.

Its subcellular location is the secreted. May interact with several cellular chemokines to interfere with chemokine-glycosaminoglycan (GAG) interactions at the cell surface to alter chemotaxis of nearby responsive cells. The polypeptide is Protein OPG170 (OPG170) (Vaccinia virus (strain Copenhagen) (VACV)).